The primary structure comprises 421 residues: Esterase LipQ (421 aa).

Active-site residues include Ser-249, Asp-344, and His-377.

It belongs to the 'GDXG' lipolytic enzyme family.

The catalysed reaction is hexadecanoate ester + H2O = an aliphatic alcohol + hexadecanoate + H(+). In terms of biological role, shows lipase activity. Is highly immunogenic and may play an important role in the virulence and pathogenesis of M.tuberculosis infection, by altering the balance of cytokines. Significantly down-regulates the expression level of pro-inflammatory cytokines (TNF-alpha and IFN-gamma) and up-regulates the level of anti-inflammatory cytokines such as IL-4 and IL-10 as compared to LPS stimulated macrophages. Also inhibits the expression of iNOS, TLR2 and transcription factor NF-kappa-B in LPS stimulated macrophages whereas the expression of TLR-4 remains unchanged. The chain is Esterase LipQ from Mycobacterium tuberculosis (strain ATCC 25618 / H37Rv).